The sequence spans 779 residues: Catalase-peroxidase (779 aa).

A cross-link (tryptophyl-tyrosyl-methioninium (Trp-Tyr) (with M-296)) is located at residues Trp148–Tyr270. His149 (proton acceptor) is an active-site residue. The tryptophyl-tyrosyl-methioninium (Tyr-Met) (with W-148) cross-link spans Tyr270–Met296. His311 contacts heme b.

It belongs to the peroxidase family. Peroxidase/catalase subfamily. In terms of assembly, homodimer or homotetramer. It depends on heme b as a cofactor. In terms of processing, formation of the three residue Trp-Tyr-Met cross-link is important for the catalase, but not the peroxidase activity of the enzyme.

It carries out the reaction H2O2 + AH2 = A + 2 H2O. It catalyses the reaction 2 H2O2 = O2 + 2 H2O. Bifunctional enzyme with both catalase and broad-spectrum peroxidase activity. This Bradyrhizobium diazoefficiens (strain JCM 10833 / BCRC 13528 / IAM 13628 / NBRC 14792 / USDA 110) protein is Catalase-peroxidase.